The primary structure comprises 196 residues: RNA annealing protein YRA2 (196 aa).

2 disordered regions span residues 1 to 63 and 143 to 196; these read MSVD…PTHQ and DSTR…MNGN. The RRM domain maps to 63–137; sequence QRVRFLNIPL…AKITVEIFEQ (75 aa). A compositionally biased stretch (basic and acidic residues) spans 149-159; that stretch reads RSTDHVEKEAG.

Belongs to the YRA1 family. As to quaternary structure, associates with mRNPs.

It localises to the nucleus. In terms of biological role, involved in export of poly(A) mRNAs from the nucleus. Recruited to the coding sequences as well as poly-A sites of active genes. This is RNA annealing protein YRA2 (YRA2) from Eremothecium gossypii (strain ATCC 10895 / CBS 109.51 / FGSC 9923 / NRRL Y-1056) (Yeast).